We begin with the raw amino-acid sequence, 335 residues long: UPF0353 protein BCG_1543 (335 aa).

2 helical membrane-spanning segments follow: residues 18–38 (WFFLFLFVVAGLVALYILMQL) and 67–87 (VPAILLVLSLLLFTIAMAGPT). Positions 98–294 (VVMLVIDVSQ…AELRAVYSSL (197 aa)) constitute a VWFA domain. Residues 309-329 (VGWLRLGALALALAALAALLI) form a helical membrane-spanning segment.

It belongs to the UPF0353 family.

The protein localises to the cell membrane. The chain is UPF0353 protein BCG_1543 from Mycobacterium bovis (strain BCG / Pasteur 1173P2).